We begin with the raw amino-acid sequence, 445 residues long: Putative MgpC-like protein MPN_464 (445 aa).

Residues Ser-23–Asn-44 form a disordered region. Positions Ser-31–Asp-43 are enriched in low complexity.

This sequence belongs to the MgpC family.

This Mycoplasma pneumoniae (strain ATCC 29342 / M129 / Subtype 1) (Mycoplasmoides pneumoniae) protein is Putative MgpC-like protein MPN_464.